Consider the following 552-residue polypeptide: Cation/acetate symporter ActP (552 aa).

Helical transmembrane passes span 5-25, 35-55, 78-98, 105-125, 151-171, 185-205, 208-228, 264-284, 305-325, 357-377, 407-427, 431-451, 466-486, and 499-519; these read FMMLFGLLTLPVLAWAADALT, IQAIVMFLLFVGGTLYITYWA, GLAIAGDYMSAASFLGISALV, GLIYSLGFLVGWPIILFLIAE, LSACGSLVVVALYLIAQMVGA, VAVILVGILMVMYVMFGGMLA, WVQIIKAVLLLFGATFMAVMV, ISALSLGLGLMFGTAGLPHIL, GFMGYFYFLTFIIGFGAILLV, FFLGFISAVAFATILAVVAGL, VSKITVLVLGVVAISLGILFE, IAFMVGLAFSIAASCNFPIII, IGGWAGLLTAVILMILGPTIW, and YDYPALFSMLVAFIGIWFFSI.

This sequence belongs to the sodium:solute symporter (SSF) (TC 2.A.21) family.

It localises to the cell inner membrane. Transports acetate. This is Cation/acetate symporter ActP from Pectobacterium carotovorum subsp. carotovorum (strain PC1).